We begin with the raw amino-acid sequence, 400 residues long: CCA-adding enzyme (400 aa).

ATP is bound by residues glycine 28 and arginine 31. Positions 28 and 31 each coordinate CTP. Residues aspartate 41 and aspartate 43 each coordinate Mg(2+). The ATP site is built by arginine 112, aspartate 155, arginine 158, arginine 161, and arginine 164. CTP-binding residues include arginine 112, aspartate 155, arginine 158, arginine 161, and arginine 164.

This sequence belongs to the tRNA nucleotidyltransferase/poly(A) polymerase family. Bacterial CCA-adding enzyme type 3 subfamily. Homodimer. Requires Mg(2+) as cofactor.

The enzyme catalyses a tRNA precursor + 2 CTP + ATP = a tRNA with a 3' CCA end + 3 diphosphate. The catalysed reaction is a tRNA with a 3' CCA end + 2 CTP + ATP = a tRNA with a 3' CCACCA end + 3 diphosphate. Catalyzes the addition and repair of the essential 3'-terminal CCA sequence in tRNAs without using a nucleic acid template. Adds these three nucleotides in the order of C, C, and A to the tRNA nucleotide-73, using CTP and ATP as substrates and producing inorganic pyrophosphate. tRNA 3'-terminal CCA addition is required both for tRNA processing and repair. Also involved in tRNA surveillance by mediating tandem CCA addition to generate a CCACCA at the 3' terminus of unstable tRNAs. While stable tRNAs receive only 3'-terminal CCA, unstable tRNAs are marked with CCACCA and rapidly degraded. The chain is CCA-adding enzyme from Staphylococcus aureus (strain MRSA252).